The chain runs to 537 residues: Glucan 1,6-alpha-glucosidase (537 aa).

The Nucleophile role is filled by D194. E236 acts as the Proton donor in catalysis.

It belongs to the glycosyl hydrolase 13 family.

The protein localises to the cytoplasm. The catalysed reaction is Hydrolysis of (1-&gt;6)-alpha-D-glucosidic linkages in (1-&gt;6)-alpha-D-glucans and derived oligosaccharides.. In terms of biological role, the physiological substrates may be short isomaltosaccharides. This chain is Glucan 1,6-alpha-glucosidase (dexB), found in Streptococcus dysgalactiae subsp. equisimilis (Streptococcus equisimilis).